An 821-amino-acid polypeptide reads, in one-letter code: Envelope glycoprotein gp160 (821 aa).

The Extracellular portion of the chain corresponds to 1-737 (MSTGNVYQEL…FTWWVQYLKW (737 aa)). Cysteine 67 and cysteine 80 are oxidised to a cystine. N-linked (GlcNAc...) asparagine; by host glycosylation is found at asparagine 71, asparagine 98, asparagine 144, asparagine 175, asparagine 190, asparagine 215, asparagine 224, asparagine 266, asparagine 287, asparagine 333, asparagine 383, asparagine 389, asparagine 394, asparagine 423, asparagine 447, and asparagine 516. 4 disulfides stabilise this stretch: cysteine 127–cysteine 232, cysteine 134–cysteine 223, cysteine 139–cysteine 187, and cysteine 244–cysteine 272. Residues 139–186 (CQETENVSATTAKPITTPTTTSTVASSTEIYLDVDKNNTEEKVERNHV) form a V1 region. Residues 187 to 223 (CRYNITGLCRDSKEEIVTNFRGDDVKCENNTCYMNHC) are V2. A V3 region spans residues 328–361 (CHRKGNRSVVSTPSATGLLFYHGLEPGKNLKKGM). 2 disulfides stabilise this stretch: cysteine 439-cysteine 499 and cysteine 446-cysteine 469. Positions 446 to 469 (CNVTRIMRAWNDPNEKKWYPYASC) are V4. Residues 515–526 (SNETKMQIKFLP) form a V5 region. A fusion peptide region spans residues 570-590 (GAVILGILGLLSLAGSAMGSV). A coiled-coil region spans residues 607–627 (EQQKQLLKLIEQQSELLKLTI). Residues asparagine 669, asparagine 675, and asparagine 694 are each glycosylated (N-linked (GlcNAc...) asparagine; by host). An MPER; binding to GalCer region spans residues 715–736 (KLGDLTSWASWFDFTWWVQYLK). A helical membrane pass occupies residues 738 to 758 (GVFLVLGIIGLRILLALWNTI). Over 759–821 (SRFRQGYRPV…IEDLTSFARE (63 aa)) the chain is Cytoplasmic. Positions 765–768 (YRPV) match the YXXV motif; contains endocytosis signal motif. The disordered stretch occupies residues 780-805 (KRPDNGEEESNSLELGEHNSENLKEE). Basic and acidic residues predominate over residues 794–805 (LGEHNSENLKEE).

The mature envelope protein (Env) consists of a homotrimer of non-covalently associated gp120-gp41 heterodimers. The resulting complex protrudes from the virus surface as a spike. Interacts with host CD4 and CCR5. Gp120 also interacts with the C-type lectins CD209/DC-SIGN and CLEC4M/DC-SIGNR (collectively referred to as DC-SIGN(R)). As to quaternary structure, the mature envelope protein (Env) consists of a homotrimer of non-covalently associated gp120-gp41 heterodimers. The resulting complex protrudes from the virus surface as a spike. Specific enzymatic cleavages in vivo yield mature proteins. Envelope glycoproteins are synthesized as an inactive precursor that is heavily N-glycosylated and processed likely by host cell furin in the Golgi to yield the mature SU and TM proteins. The cleavage site between SU and TM requires the minimal sequence [KR]-X-[KR]-R.

It is found in the virion membrane. The protein resides in the host cell membrane. It localises to the host endosome membrane. Functionally, the surface protein gp120 (SU) attaches the virus to the host lymphoid cell by binding to the primary receptor CD4. This interaction induces a structural rearrangement creating a high affinity binding site for a chemokine coreceptor like CCR5. This peculiar 2 stage receptor-interaction strategy allows gp120 to maintain the highly conserved coreceptor-binding site in a cryptic conformation, protected from neutralizing antibodies. These changes are transmitted to the transmembrane protein gp41 and are thought to activate its fusogenic potential by unmasking its fusion peptide. In terms of biological role, surface protein gp120 (SU) may target the virus to gut-associated lymphoid tissue (GALT) by binding host ITGA4/ITGB7 (alpha-4/beta-7 integrins), a complex that mediates T-cell migration to the GALT. Interaction between gp120 and ITGA4/ITGB7 would allow the virus to enter GALT early in the infection, infecting and killing most of GALT's resting CD4+ T-cells. This T-cell depletion is believed to be the major insult to the host immune system leading to AIDS. Its function is as follows. The surface protein gp120 is a ligand for CD209/DC-SIGN and CLEC4M/DC-SIGNR, which are respectively found on dendritic cells (DCs), and on endothelial cells of liver sinusoids and lymph node sinuses. These interactions allow capture of viral particles at mucosal surfaces by these cells and subsequent transmission to permissive cells. DCs are professional antigen presenting cells, critical for host immunity by inducing specific immune responses against a broad variety of pathogens. They act as sentinels in various tissues where they take up antigen, process it, and present it to T-cells following migration to lymphoid organs. SIV subverts the migration properties of dendritic cells to gain access to CD4+ T-cells in lymph nodes. Virus transmission to permissive T-cells occurs either in trans (without DCs infection, through viral capture and transmission), or in cis (following DCs productive infection, through the usual CD4-gp120 interaction), thereby inducing a robust infection. In trans infection, bound virions remain infectious over days and it is proposed that they are not degraded, but protected in non-lysosomal acidic organelles within the DCs close to the cell membrane thus contributing to the viral infectious potential during DCs' migration from the periphery to the lymphoid tissues. On arrival at lymphoid tissues, intact virions recycle back to DCs' cell surface allowing virus transmission to CD4+ T-cells. Virion capture also seems to lead to MHC-II-restricted viral antigen presentation, and probably to the activation of SIV-specific CD4+ cells. The transmembrane protein gp41 (TM) acts as a class I viral fusion protein. Under the current model, the protein has at least 3 conformational states: pre-fusion native state, pre-hairpin intermediate state, and post-fusion hairpin state. During fusion of viral and target intracellular membranes, the coiled coil regions (heptad repeats) assume a trimer-of-hairpins structure, positioning the fusion peptide in close proximity to the C-terminal region of the ectodomain. The formation of this structure appears to drive apposition and subsequent fusion of viral and target cell membranes. Complete fusion occurs in host cell endosomes. The virus undergoes clathrin-dependent internalization long before endosomal fusion, thus minimizing the surface exposure of conserved viral epitopes during fusion and reducing the efficacy of inhibitors targeting these epitopes. Membranes fusion leads to delivery of the nucleocapsid into the cytoplasm. Functionally, the envelope glycoprotein gp160 precursor down-modulates cell surface CD4 antigen by interacting with it in the endoplasmic reticulum and blocking its transport to the cell surface. In terms of biological role, the gp120-gp41 heterodimer allows rapid transcytosis of the virus through CD4 negative cells such as simple epithelial monolayers of the intestinal, rectal and endocervical epithelial barriers. Both gp120 and gp41 specifically recognize glycosphingolipids galactosyl-ceramide (GalCer) or 3' sulfo-galactosyl-ceramide (GalS) present in the lipid rafts structures of epithelial cells. Binding to these alternative receptors allows the rapid transcytosis of the virus through the epithelial cells. This transcytotic vesicle-mediated transport of virions from the apical side to the basolateral side of the epithelial cells does not involve infection of the cells themselves. In Cercopithecidae (Old World monkeys), this protein is Envelope glycoprotein gp160 (env).